A 297-amino-acid chain; its full sequence is F-box only protein 2 (297 aa).

The tract at residues Met-1–Ala-47 is disordered. Residues Ala-16–Ala-47 show a composition bias toward acidic residues. The 48-residue stretch at Val-48–Lys-95 folds into the F-box domain. Phosphoserine is present on Ser-106. The region spanning Phe-117–Pro-297 is the FBA domain. Residues Arg-214–Asp-216 and Tyr-279–Trp-280 each bind a carbohydrate.

In terms of assembly, component of the SCF(FBXO2) complex consisting of CUL1, RBX1, SKP1 and FBXO2. Predominantly detected as heterodimer with SKP1; the heterodimer with SKP1 is not part of the SCF(FBXO2) complex. In terms of tissue distribution, detected in brain and cochlea, in epithelial support cells and hair cells of the organ of Corti (at protein level).

The protein resides in the cytoplasm. The protein localises to the microsome membrane. It participates in protein modification; protein ubiquitination. Its function is as follows. Substrate recognition component of a SCF (SKP1-CUL1-F-box protein) E3 ubiquitin-protein ligase complex that mediates the ubiquitination and subsequent proteasomal degradation of target proteins. Involved in the endoplasmic reticulum-associated degradation pathway (ERAD) for misfolded lumenal proteins by recognizing and binding sugar chains on unfolded glycoproteins that are retrotranslocated into the cytosol and promoting their ubiquitination and subsequent degradation. Prevents formation of cytosolic aggregates of unfolded glycoproteins that have been retrotranslocated into the cytosol. Able to recognize and bind denatured glycoproteins, preferentially those of the high-mannose type. The chain is F-box only protein 2 (Fbxo2) from Mus musculus (Mouse).